The chain runs to 136 residues: Globin-2 (136 aa).

Positions 1–134 constitute a Globin domain; sequence VSQADIAAVQ…ILSQMKIALS (134 aa). Histidine 89 provides a ligand contact to heme b.

This sequence belongs to the globin family. In terms of assembly, homodimer.

This is Globin-2 from Phreagena soyoae (Deep-sea cold-seep clam).